Consider the following 303-residue polypeptide: Ornithine carbamoyltransferase (303 aa).

Carbamoyl phosphate contacts are provided by residues 52–55 (STRT), glutamine 79, arginine 103, and 130–133 (HPCQ). L-ornithine is bound by residues asparagine 161, aspartate 221, and 225-226 (SM). Residues 260-261 (CL) and arginine 288 each bind carbamoyl phosphate.

Belongs to the aspartate/ornithine carbamoyltransferase superfamily. OTCase family.

Its subcellular location is the cytoplasm. It catalyses the reaction carbamoyl phosphate + L-ornithine = L-citrulline + phosphate + H(+). Its pathway is amino-acid biosynthesis; L-arginine biosynthesis; L-arginine from L-ornithine and carbamoyl phosphate: step 1/3. Reversibly catalyzes the transfer of the carbamoyl group from carbamoyl phosphate (CP) to the N(epsilon) atom of ornithine (ORN) to produce L-citrulline. This chain is Ornithine carbamoyltransferase (argF), found in Rhizobium meliloti (strain 1021) (Ensifer meliloti).